The chain runs to 317 residues: Probable cell division protein WhiA (317 aa).

A DNA-binding region (H-T-H motif) is located at residues 281–314 (SLKELGKMLEPPVGKSGVNHRLRKIEKIAEELRK).

This sequence belongs to the WhiA family.

Its function is as follows. Involved in cell division and chromosome segregation. In Clostridium acetobutylicum (strain ATCC 824 / DSM 792 / JCM 1419 / IAM 19013 / LMG 5710 / NBRC 13948 / NRRL B-527 / VKM B-1787 / 2291 / W), this protein is Probable cell division protein WhiA.